The following is a 154-amino-acid chain: Fimbrial protein (154 aa).

The propeptide at 1-6 is leader sequence; sequence MKAQKG. Phenylalanine 7 is subject to N-methylphenylalanine. Residues 7–27 form a helical membrane-spanning segment; it reads FTLIELMIVVAIIGILAAIAI. Residues cysteine 133 and cysteine 151 are joined by a disulfide bond.

Belongs to the N-Me-Phe pilin family. The pili are polar flexible filaments of about 5.4 nanometers diameter and 2.5 micrometers average length; they consist of only a single polypeptide chain arranged in a helical configuration of five subunits per turn in the assembled pilus.

It is found in the fimbrium. The protein localises to the membrane. This chain is Fimbrial protein (pilA), found in Pseudomonas aeruginosa.